An 88-amino-acid chain; its full sequence is uncharacterized protein (88 aa).

The next 2 membrane-spanning stretches (helical) occupy residues 5 to 25 and 36 to 56; these read AIPF…LLFV and CYYL…VMIF.

The protein localises to the membrane. This is an uncharacterized protein from Saccharomyces cerevisiae (strain ATCC 204508 / S288c) (Baker's yeast).